The chain runs to 266 residues: Tryptophan synthase alpha chain (266 aa).

Residues glutamate 52 and aspartate 63 each act as proton acceptor in the active site.

This sequence belongs to the TrpA family. In terms of assembly, tetramer of two alpha and two beta chains.

The enzyme catalyses (1S,2R)-1-C-(indol-3-yl)glycerol 3-phosphate + L-serine = D-glyceraldehyde 3-phosphate + L-tryptophan + H2O. The protein operates within amino-acid biosynthesis; L-tryptophan biosynthesis; L-tryptophan from chorismate: step 5/5. In terms of biological role, the alpha subunit is responsible for the aldol cleavage of indoleglycerol phosphate to indole and glyceraldehyde 3-phosphate. This chain is Tryptophan synthase alpha chain, found in Nocardia farcinica (strain IFM 10152).